We begin with the raw amino-acid sequence, 504 residues long: ATP synthase subunit alpha, chloroplastic (504 aa).

ATP is bound at residue 170 to 177 (GDRQTGKT).

This sequence belongs to the ATPase alpha/beta chains family. As to quaternary structure, F-type ATPases have 2 components, CF(1) - the catalytic core - and CF(0) - the membrane proton channel. CF(1) has five subunits: alpha(3), beta(3), gamma(1), delta(1), epsilon(1). CF(0) has four main subunits: a, b, b' and c.

The protein localises to the plastid. The protein resides in the chloroplast thylakoid membrane. It catalyses the reaction ATP + H2O + 4 H(+)(in) = ADP + phosphate + 5 H(+)(out). Its function is as follows. Produces ATP from ADP in the presence of a proton gradient across the membrane. The alpha chain is a regulatory subunit. This is ATP synthase subunit alpha, chloroplastic from Jasminum nudiflorum (Winter jasmine).